The following is a 403-amino-acid chain: Zinc finger HIT domain-containing protein 2 (403 aa).

N-acetylmethionine is present on methionine 1. Positions 7, 10, 22, 25, 30, 34, 38, and 41 each coordinate Zn(2+). The segment at 7-41 (CGFCPAGEVQPARYTCPRCNAPYCSLRCYRTHGTC) adopts an HIT-type zinc-finger fold. The segment at 72–98 (RQQRETEDEPGEAGLSSGPAPGGLSGL) is disordered. A Phosphothreonine modification is found at threonine 161.

As to quaternary structure, interacts (via HIT-type zinc finger) with RUVBL2 in the presence of ATP or ADP; shows a stronger interaction in the presence of ADP. In terms of tissue distribution, low expression in most tissues; highly expressed in testis.

Functionally, may act as a bridging factor mediating the interaction between the R2TP/Prefoldin-like (R2TP/PFDL) complex and U5 small nuclear ribonucleoprotein (U5 snRNP). Required for the interaction of R2TP complex subunit RPAP3 and prefoldin-like subunit URI1 with U5 snRNP proteins EFTUD2 and PRPF8. May play a role in regulating the composition of the U5 snRNP complex. The sequence is that of Zinc finger HIT domain-containing protein 2 (ZNHIT2) from Homo sapiens (Human).